The following is a 552-amino-acid chain: FERRY endosomal RAB5 effector complex subunit 3 (552 aa).

The tract at residues 383-403 (LKESLDSGNQNGGNDDKTKNA) is disordered.

In terms of assembly, component of the FERRY complex composed of five subunits, TBCK, PPP1R21, FERRY3, CRYZL1 and GATD1 with a ratio of 1:2:1:2:4, respectively.

The protein resides in the cytoplasm. It localises to the early endosome. Functionally, component of the FERRY complex (Five-subunit Endosomal Rab5 and RNA/ribosome intermediary). The FERRY complex directly interacts with mRNAs and RAB5A, and functions as a RAB5A effector involved in the localization and the distribution of specific mRNAs most likely by mediating their endosomal transport. The complex recruits mRNAs and ribosomes to early endosomes through direct mRNA-interaction. Plays a role in mast cell degranulation. The polypeptide is FERRY endosomal RAB5 effector complex subunit 3 (Pongo abelii (Sumatran orangutan)).